A 435-amino-acid chain; its full sequence is 5-methylthioadenosine/S-adenosylhomocysteine deaminase (435 aa).

2 residues coordinate Zn(2+): H65 and H67. Substrate is bound by residues E94, R150, and H189. H216 is a binding site for Zn(2+). 2 residues coordinate substrate: E219 and D304. Residue D304 coordinates Zn(2+).

The protein belongs to the metallo-dependent hydrolases superfamily. MTA/SAH deaminase family. Zn(2+) serves as cofactor.

The catalysed reaction is S-adenosyl-L-homocysteine + H2O + H(+) = S-inosyl-L-homocysteine + NH4(+). The enzyme catalyses S-methyl-5'-thioadenosine + H2O + H(+) = S-methyl-5'-thioinosine + NH4(+). Catalyzes the deamination of 5-methylthioadenosine and S-adenosyl-L-homocysteine into 5-methylthioinosine and S-inosyl-L-homocysteine, respectively. Is also able to deaminate adenosine. In Bacillus cereus (strain ATCC 14579 / DSM 31 / CCUG 7414 / JCM 2152 / NBRC 15305 / NCIMB 9373 / NCTC 2599 / NRRL B-3711), this protein is 5-methylthioadenosine/S-adenosylhomocysteine deaminase.